Consider the following 367-residue polypeptide: MNVLIKKFYHLVVRILSKMITPQVIDKPHIVFMMTFPEDIKPIIKALNNSSYQKTVLTTPKQAPYLSELSDDVDVIEMTNRTLVKQIKALKSAQMIIIDNYYLLLGGYNKTSNQHIVQTWHASGALKNFGLTDHQVDVSDKAMVQQYRKVYQATDFYLVGCEQMSQCFKQSLGATEEQMLYFGLPRINKYYTADRATVKAELKDKYGITNKLVLYVPTYREDKADNRAIDKAYFEKCLPGYTLINKLHPSIEDSDIDDVSSIDTSTLMLMSDIIISDYSSLPIEASLLDIPTIFYVYDEGTYDQVRGLNQFYKAIPDSYKVYTEEDLIMTIQEKEHLLSPLFKDWHKYNTDKSLHQLTEYIDKMVTK.

The protein belongs to the CDP-glycerol glycerophosphotransferase family.

It is found in the cell membrane. It catalyses the reaction N-acetyl-beta-D-mannosaminyl-(1-&gt;4)-N-acetyl-alpha-D-glucosaminyl di-trans,octa-cis-undecaprenyl diphosphate + CDP-glycerol = 4-O-[(2R)-glycerylphospho]-N-acetyl-beta-D-mannosaminyl-(1-&gt;4)-N-acetyl-alpha-D-glucosaminyl di-trans,octa-cis-undecaprenyl diphosphate + CMP + H(+). The protein operates within cell wall biogenesis; poly(ribitol phosphate) teichoic acid biosynthesis. Its function is as follows. Catalyzes the addition of a single glycerol phosphate residue to the prenoldiphosphate-linked disaccharide. The polypeptide is Teichoic acid glycerol-phosphate primase (tarB) (Staphylococcus aureus (strain NCTC 8325 / PS 47)).